Reading from the N-terminus, the 222-residue chain is Collectrin (222 aa).

An N-terminal signal peptide occupies residues 1 to 14 (MLWLLFFLVTAIHA). The Extracellular segment spans residues 15-141 (ELCQPGAENA…LAPPMDPSVP (127 aa)). Positions 21–222 (AENAFKVRLS…MTEDERLTPL (202 aa)) constitute a Collectrin-like domain. Asn-76 and Asn-93 each carry an N-linked (GlcNAc...) asparagine glycan. A helical transmembrane segment spans residues 142-162 (IWIIIFGVIFCIIIVAIALLI). At 163–222 (LSGIWQRRRKNKEPSEVDDAEDKCENMITIENGIPSDPLDMKGGHINDAFMTEDERLTPL) the chain is on the cytoplasmic side. Phosphothreonine is present on residues Thr-214 and Thr-220.

It belongs to the CLTRN family. In terms of assembly, monomer. Homodimer; dimerization prevents CLTRN cleavage by BACE2. Interacts with SLC6A18; this interaction regulates the trafficking of SLC6A18 to the cell membrane and its amino acid transporter activity. Interacts with SLC6A19; this interaction regulates the trafficking of SLC6A19 to the cell membrane and its amino acid transporter activity. Interacts with SNAPIN. Post-translationally, glycosylated. Glycosylation is required for plasma membrane localization and for its cleavage by BACE2. In terms of processing, proteolytically processed in pancreatic beta cells by BACE2 leading to the generation and extracellular release of soluble CLTRN, and a corresponding cell-associated C-terminal fragment which is later cleaved by gamma-secretase. This shedding process inactivates CLTRN. Three cleavage sites have been identified for BACE2, two clustered sites after Phe-116 and Leu-118 and a more membrane proximal site at Phe-125; the preferred BACE2 cleavage site seems to be between Phe-125 and Leu-126, Phe-116 and Leu-118 act as alternative sites. Kidney; collecting ducts. Pancreas; beta cells of islets.

It is found in the cell membrane. Plays an important role in amino acid transport by acting as binding partner of amino acid transporters SLC6A18 and SLC6A19, regulating their trafficking on the cell surface and their amino acid transporter activity. May also play a role in trafficking of amino acid transporters SLC3A1 and SLC7A9 to the renal cortical cell membrane. Regulator of SNARE complex function. Stimulator of beta cell replication. The chain is Collectrin from Homo sapiens (Human).